We begin with the raw amino-acid sequence, 1125 residues long: Phytochrome A (1125 aa).

Low complexity-rich tracts occupy residues 1-14 and 39-48; these read MSSS…SNSA and SGSSFDYSSS. 2 disordered regions span residues 1–22 and 38–64; these read MSSS…SARI and ESGS…PRSD. Positions 218–401 constitute a GAF domain; sequence SMERLCDTMV…VFAIHVNKEL (184 aa). Cys-323 is a phytochromobilin binding site. PAS domains follow at residues 617–687 and 750–821; these read VTSE…LQGK and DYKA…VNLG. The 217-residue stretch at 901–1117 folds into the Histidine kinase domain; that stretch reads YLKKQIWNPL…SFIISVELAG (217 aa).

It belongs to the phytochrome family. In terms of assembly, homodimer. Post-translationally, contains one covalently linked phytochromobilin chromophore.

Its function is as follows. Regulatory photoreceptor which exists in two forms that are reversibly interconvertible by light: the Pr form that absorbs maximally in the red region of the spectrum and the Pfr form that absorbs maximally in the far-red region. Photoconversion of Pr to Pfr induces an array of morphogenic responses, whereas reconversion of Pfr to Pr cancels the induction of those responses. Pfr controls the expression of a number of nuclear genes including those encoding the small subunit of ribulose-bisphosphate carboxylase, chlorophyll A/B binding protein, protochlorophyllide reductase, rRNA, etc. It also controls the expression of its own gene(s) in a negative feedback fashion. This Populus tremuloides (Quaking aspen) protein is Phytochrome A (PHYA).